The following is a 307-amino-acid chain: tRNA dimethylallyltransferase (307 aa).

7–14 (GPTAGGKT) is a binding site for ATP. 9–14 (TAGGKT) lines the substrate pocket. The interaction with substrate tRNA stretch occupies residues 32 to 35 (DSRQ).

This sequence belongs to the IPP transferase family. As to quaternary structure, monomer. Requires Mg(2+) as cofactor.

The catalysed reaction is adenosine(37) in tRNA + dimethylallyl diphosphate = N(6)-dimethylallyladenosine(37) in tRNA + diphosphate. In terms of biological role, catalyzes the transfer of a dimethylallyl group onto the adenine at position 37 in tRNAs that read codons beginning with uridine, leading to the formation of N6-(dimethylallyl)adenosine (i(6)A). This chain is tRNA dimethylallyltransferase, found in Elusimicrobium minutum (strain Pei191).